The sequence spans 41 residues: Antimicrobial protein PN-AMP1 (41 aa).

Residue Gln-1 is modified to Pyrrolidone carboxylic acid. The Chitin-binding type-1 domain maps to 1–41; the sequence is QQCGRQASGRLCGNRLCCSQWGYCGSTASYCGAGCQSQCRS. 4 disulfide bridges follow: Cys-3–Cys-18, Cys-12–Cys-24, Cys-17–Cys-31, and Cys-35–Cys-39.

In terms of biological role, chitin-binding protein with a defensive function against numerous chitin containing fungal pathogens. It is also an inhibitor of Gram-positive bacteria such as B.subtilis. This is Antimicrobial protein PN-AMP1 from Ipomoea nil (Japanese morning glory).